Reading from the N-terminus, the 264-residue chain is Stage 0 sporulation protein A (264 aa).

The region spanning 5–123 is the Response regulatory domain; sequence KVCLVDDNKE…NLTSHIRQVS (119 aa). Ca(2+) is bound by residues D10, D11, and D56. A 4-aspartylphosphate modification is found at D56. The H-T-H motif DNA-binding region spans 196–215; the sequence is PDIAKKYNTTASRVERAIRH.

Ca(2+) is required as a cofactor. Post-translationally, phosphorylated by KinA and KinB.

The protein localises to the cytoplasm. In terms of biological role, may play the central regulatory role in sporulation. It may be an element of the effector pathway responsible for the activation of sporulation genes in response to nutritional stress. Spo0A may act in concert with Spo0H (a sigma factor) to control the expression of some genes that are critical to the sporulation process. Repressor of abrB, activator of the spoIIa operon. Binds the DNA sequence 5'-TGNCGAA-3' (0A box). This chain is Stage 0 sporulation protein A (spo0A), found in Bacillus anthracis.